A 275-amino-acid chain; its full sequence is Diaminopimelate epimerase (275 aa).

Positions 12, 45, and 65 each coordinate substrate. Cys-74 serves as the catalytic Proton donor. Substrate-binding positions include 75-76, Asn-158, Asn-191, and 209-210; these read GN and ER. The active-site Proton acceptor is the Cys-218. 219-220 is a substrate binding site; it reads GS.

The protein belongs to the diaminopimelate epimerase family. As to quaternary structure, homodimer.

It is found in the cytoplasm. The enzyme catalyses (2S,6S)-2,6-diaminopimelate = meso-2,6-diaminopimelate. Its pathway is amino-acid biosynthesis; L-lysine biosynthesis via DAP pathway; DL-2,6-diaminopimelate from LL-2,6-diaminopimelate: step 1/1. Catalyzes the stereoinversion of LL-2,6-diaminopimelate (L,L-DAP) to meso-diaminopimelate (meso-DAP), a precursor of L-lysine and an essential component of the bacterial peptidoglycan. In Shewanella amazonensis (strain ATCC BAA-1098 / SB2B), this protein is Diaminopimelate epimerase.